A 187-amino-acid chain; its full sequence is Interferon alpha-1/2 (187 aa).

The first 23 residues, 1-23, serve as a signal peptide directing secretion; the sequence is MALPCSFSVALVLLSCHSLCCLA. 2 disulfide bridges follow: Cys-24–Cys-122 and Cys-52–Cys-160. Residue Asn-101 is glycosylated (N-linked (GlcNAc...) asparagine).

The protein belongs to the alpha/beta interferon family.

The protein localises to the secreted. Produced by macrophages, IFN-alpha have antiviral activities. Interferon stimulates the production of two enzymes: a protein kinase and an oligoadenylate synthetase. This chain is Interferon alpha-1/2, found in Canis lupus familiaris (Dog).